Here is a 184-residue protein sequence, read N- to C-terminus: MKNVTDSFVSLGYWPSAGSFGFNTDILATNLINLSVVLGVLIFFGKGVLSDLLDNRKQRILSTIRNSEELREGAIEQLEKARARLRKVEMEADEFRVNGYSEIEREKQNLINATYENLERLENYKNETIHFEEQRAINQVRQRVFQQALQGALGTLNSCSNSELHLRTISANIGVLGAMKEITD.

A helical membrane pass occupies residues 27 to 49 (LATNLINLSVVLGVLIFFGKGVL).

It belongs to the ATPase B chain family. In terms of assembly, F-type ATPases have 2 components, F(1) - the catalytic core - and F(0) - the membrane proton channel. F(1) has five subunits: alpha(3), beta(3), gamma(1), delta(1), epsilon(1). F(0) has four main subunits: a(1), b(1), b'(1) and c(10-14). The alpha and beta chains form an alternating ring which encloses part of the gamma chain. F(1) is attached to F(0) by a central stalk formed by the gamma and epsilon chains, while a peripheral stalk is formed by the delta, b and b' chains.

It localises to the plastid. It is found in the chloroplast thylakoid membrane. Functionally, f(1)F(0) ATP synthase produces ATP from ADP in the presence of a proton or sodium gradient. F-type ATPases consist of two structural domains, F(1) containing the extramembraneous catalytic core and F(0) containing the membrane proton channel, linked together by a central stalk and a peripheral stalk. During catalysis, ATP synthesis in the catalytic domain of F(1) is coupled via a rotary mechanism of the central stalk subunits to proton translocation. Component of the F(0) channel, it forms part of the peripheral stalk, linking F(1) to F(0). The chain is ATP synthase subunit b, chloroplastic from Liriodendron tulipifera (Tuliptree).